The primary structure comprises 61 residues: Large ribosomal subunit protein uL30 (61 aa).

The protein belongs to the universal ribosomal protein uL30 family. As to quaternary structure, part of the 50S ribosomal subunit.

In Bifidobacterium longum (strain DJO10A), this protein is Large ribosomal subunit protein uL30.